The primary structure comprises 463 residues: MDFGVLPPEINSGRMYAGPGSGPMLAAAAAWDGLATELQSTAADYGSVISVLTGVWSGQSSGTMAAAAAPYVAWMSATAALAREAAAQASAAAAAYEAAFAATVPPPVVAANRAELAVLAATNIFGQNTGAIAAAEARYAEMWAQDAAAMYGYAGSSSVATQVTPFAAPPPTTNAAGLATQGVAVAQAVGASAGNARSLVSEVLEFLATAGTNYNKTVASLMNAVTGVPYASSVYNSMLGLGFAESKMVLPANDTVISTIFGMVQFQKFFNPVTPFNPDLIPKSALGAGLGLRSAISSGLGSTAPAISAGASQAGSVGGMSVPPSWAAATPAIRTVAAVFSSTGLQAVPAAAISEGSLLSQMALASVAGGALGGAAARATGGFLGGGRVTAVKKSLKDSDSPDKLRRVVAHMMEKPESVQHWHTDEDGLDDLLAELKKKPGIHAVHMAGGNKAEIAPTISESG.

Belongs to the mycobacterial PPE family.

This is an uncharacterized protein from Mycobacterium tuberculosis (strain ATCC 25618 / H37Rv).